A 167-amino-acid polypeptide reads, in one-letter code: Photosystem I assembly protein Ycf3 (167 aa).

3 TPR repeats span residues 35-68, 72-105, and 120-153; these read AFTY…EVDA, SYIF…NPSL, and GEQA…APTN.

It belongs to the Ycf3 family.

It is found in the plastid. The protein localises to the chloroplast thylakoid membrane. Essential for the assembly of the photosystem I (PSI) complex. May act as a chaperone-like factor to guide the assembly of the PSI subunits. The chain is Photosystem I assembly protein Ycf3 from Pleurastrum terricola (Filamentous green alga).